The primary structure comprises 134 residues: ATP synthase epsilon chain (134 aa).

This sequence belongs to the ATPase epsilon chain family. F-type ATPases have 2 components, CF(1) - the catalytic core - and CF(0) - the membrane proton channel. CF(1) has five subunits: alpha(3), beta(3), gamma(1), delta(1), epsilon(1). CF(0) has three main subunits: a, b and c.

Its subcellular location is the cell membrane. Produces ATP from ADP in the presence of a proton gradient across the membrane. In Listeria innocua serovar 6a (strain ATCC BAA-680 / CLIP 11262), this protein is ATP synthase epsilon chain.